We begin with the raw amino-acid sequence, 149 residues long: Leghemoglobin (149 aa).

Residues 3–147 (AFSEKQESLV…LAAAIKKAMG (145 aa)) enclose the Globin domain. Nitrated tyrosine is present on tyrosine 31. Serine 46 contacts heme b. Serine 46 is modified (phosphoserine). Histidine 62 serves as a coordination point for O2. Positions 65, 94, and 97 each coordinate heme b. Nitrated tyrosine is present on tyrosine 135.

Belongs to the plant globin family. Monomer. Post-translationally, nitrated in effective nodules and particularly in hypoxic conditions; this mechanism may play a protective role in the symbiosis by buffering toxic peroxynitrite NO(2)(-). Nitration level decrease during nodule senescence. In terms of processing, phosphorylation at Ser-46 disrupts the molecular environment of its porphyrin ring oxygen binding pocket, thus leading to a reduced oxygen consumption and to the delivery of oxygen O(2) to symbiosomes. Root nodules.

It is found in the cytoplasm. The protein resides in the cytosol. Its subcellular location is the nucleus. Functionally, leghemoglobin that reversibly binds oxygen O(2) through a pentacoordinated heme iron. In root nodules, facilitates the diffusion of oxygen to the bacteroids while preventing the bacterial nitrogenase from being inactivated by buffering dioxygen, nitric oxide and carbon monoxide, and promoting the formation of reactive oxygen species (ROS, e.g. H(2)O(2)). This role is essential for symbiotic nitrogen fixation (SNF). The chain is Leghemoglobin from Canavalia lineata (Beach bean).